Consider the following 64-residue polypeptide: Non-structural protein 3b (64 aa).

The chain is Non-structural protein 3b from Avian infectious bronchitis virus (strain M41) (IBV).